The chain runs to 126 residues: Protein ApaG (126 aa).

The ApaG domain occupies 2-126; it reads SDPRYQIDVS…FRLAVPGALH (125 aa).

The protein is Protein ApaG of Pseudomonas fluorescens (strain SBW25).